Reading from the N-terminus, the 890-residue chain is Translation initiation factor IF-2 (890 aa).

The tract at residues 45-304 is disordered; that stretch reads LIDHLNQKNS…LQQGFQKPAQ (260 aa). The segment covering 67-81 has biased composition (polar residues); the sequence is STLNIPGTGGKSKSV. Residues 92 to 217 show a composition bias toward basic and acidic residues; sequence VKRDPQEAER…RMAEENKWID (126 aa). A compositionally biased stretch (basic residues) spans 252 to 266; it reads GRGRNAKAARPKKGN. Residues 267–280 are compositionally biased toward basic and acidic residues; that stretch reads KHAESKADREEARA. One can recognise a tr-type G domain in the interval 389–558; it reads PRAPVVTIMG…LLQAEVLELK (170 aa). Residues 398–405 are G1; sequence GHVDHGKT. 398–405 contacts GTP; it reads GHVDHGKT. Positions 423–427 are G2; it reads GITQH. The tract at residues 444-447 is G3; that stretch reads DTPG. GTP-binding positions include 444–448 and 498–501; these read DTPGH and NKID. Positions 498-501 are G4; that stretch reads NKID. The segment at 534–536 is G5; it reads SAK. Lys808 carries the N6-acetyllysine modification.

It belongs to the TRAFAC class translation factor GTPase superfamily. Classic translation factor GTPase family. IF-2 subfamily.

Its subcellular location is the cytoplasm. One of the essential components for the initiation of protein synthesis. Protects formylmethionyl-tRNA from spontaneous hydrolysis and promotes its binding to the 30S ribosomal subunits. Also involved in the hydrolysis of GTP during the formation of the 70S ribosomal complex. The protein is Translation initiation factor IF-2 of Escherichia coli O81 (strain ED1a).